A 257-amino-acid polypeptide reads, in one-letter code: Thiazole synthase (257 aa).

The Schiff-base intermediate with DXP role is filled by Lys96. Residues Gly157, 184 to 185, and 206 to 207 contribute to the 1-deoxy-D-xylulose 5-phosphate site; these read AG and NT.

The protein belongs to the ThiG family. In terms of assembly, homotetramer. Forms heterodimers with either ThiH or ThiS.

It localises to the cytoplasm. The enzyme catalyses [ThiS sulfur-carrier protein]-C-terminal-Gly-aminoethanethioate + 2-iminoacetate + 1-deoxy-D-xylulose 5-phosphate = [ThiS sulfur-carrier protein]-C-terminal Gly-Gly + 2-[(2R,5Z)-2-carboxy-4-methylthiazol-5(2H)-ylidene]ethyl phosphate + 2 H2O + H(+). The protein operates within cofactor biosynthesis; thiamine diphosphate biosynthesis. Catalyzes the rearrangement of 1-deoxy-D-xylulose 5-phosphate (DXP) to produce the thiazole phosphate moiety of thiamine. Sulfur is provided by the thiocarboxylate moiety of the carrier protein ThiS. In vitro, sulfur can be provided by H(2)S. This chain is Thiazole synthase, found in Allorhizobium ampelinum (strain ATCC BAA-846 / DSM 112012 / S4) (Agrobacterium vitis (strain S4)).